Here is a 329-residue protein sequence, read N- to C-terminus: DNA-directed RNA polymerase subunit alpha (329 aa).

The interval 1–235 (MQGSVTEFLK…EQLEAFVDLR (235 aa)) is alpha N-terminal domain (alpha-NTD). The interval 249 to 329 (FDPILLRPVD…NWPPASIADE (81 aa)) is alpha C-terminal domain (alpha-CTD).

This sequence belongs to the RNA polymerase alpha chain family. Homodimer. The RNAP catalytic core consists of 2 alpha, 1 beta, 1 beta' and 1 omega subunit. When a sigma factor is associated with the core the holoenzyme is formed, which can initiate transcription.

The enzyme catalyses RNA(n) + a ribonucleoside 5'-triphosphate = RNA(n+1) + diphosphate. Its function is as follows. DNA-dependent RNA polymerase catalyzes the transcription of DNA into RNA using the four ribonucleoside triphosphates as substrates. In Shigella dysenteriae serotype 1 (strain Sd197), this protein is DNA-directed RNA polymerase subunit alpha.